The primary structure comprises 313 residues: Porphobilinogen deaminase (313 aa).

Cys242 is subject to S-(dipyrrolylmethanemethyl)cysteine.

This sequence belongs to the HMBS family. In terms of assembly, monomer. The cofactor is dipyrromethane.

It catalyses the reaction 4 porphobilinogen + H2O = hydroxymethylbilane + 4 NH4(+). It participates in porphyrin-containing compound metabolism; protoporphyrin-IX biosynthesis; coproporphyrinogen-III from 5-aminolevulinate: step 2/4. Tetrapolymerization of the monopyrrole PBG into the hydroxymethylbilane pre-uroporphyrinogen in several discrete steps. This chain is Porphobilinogen deaminase, found in Pseudomonas fluorescens (strain ATCC BAA-477 / NRRL B-23932 / Pf-5).